A 576-amino-acid polypeptide reads, in one-letter code: Proteinaceous RNase P 3 (576 aa).

Positions 65–75 (NRRSRHDDESP) are enriched in basic and acidic residues. Positions 65-88 (NRRSRHDDESPKNPNKKKKGNRNP) are disordered. PPR repeat units lie at residues 88-123 (PEKSLLINLHSCSKRKDLSAALALYDAAITSSDIRL), 129-166 (QSLLYLCSAFISDPSLQTVAIDRGFQIFDRMVSSGISP), 167-201 (NESSVTAVARLAAAKGDGDYAFKLVKDLVAVGGVS), and 204-238 (RLRTYAPALLCFCDTLEAEKGYEVEDHMDASGIVL). The PRORP domain maps to 335 to 570 (SSAGKCLSCD…KEESLRSWMC (236 aa)). C340 and C343 together coordinate Zn(2+). Mn(2+)-binding residues include D402, D480, D481, and D499. Zn(2+) is bound by residues H553 and C570.

Belongs to the PPR family. P subfamily. It depends on Mg(2+) as a cofactor. Requires Mn(2+) as cofactor.

It localises to the nucleus. It carries out the reaction Endonucleolytic cleavage of RNA, removing 5'-extranucleotides from tRNA precursor.. Functionally, endonuclease RNase P responsible for the 5' maturation of tRNA precursors. Also involved in the maturation of mRNA and small nucleolar RNA (snoRNA). The polypeptide is Proteinaceous RNase P 3 (PRORP3) (Arabidopsis thaliana (Mouse-ear cress)).